A 385-amino-acid polypeptide reads, in one-letter code: 8-amino-7-oxononanoate synthase (385 aa).

Residue Arg-21 coordinates substrate. Position 108 to 109 (108 to 109 (GF)) interacts with pyridoxal 5'-phosphate. His-133 is a substrate binding site. Pyridoxal 5'-phosphate-binding residues include Ser-179, His-207, and Thr-233. An N6-(pyridoxal phosphate)lysine modification is found at Lys-236. Substrate is bound at residue Thr-352.

It belongs to the class-II pyridoxal-phosphate-dependent aminotransferase family. BioF subfamily. As to quaternary structure, homodimer. The cofactor is pyridoxal 5'-phosphate.

It carries out the reaction 6-carboxyhexanoyl-[ACP] + L-alanine + H(+) = (8S)-8-amino-7-oxononanoate + holo-[ACP] + CO2. Its pathway is cofactor biosynthesis; biotin biosynthesis. Its function is as follows. Catalyzes the decarboxylative condensation of pimeloyl-[acyl-carrier protein] and L-alanine to produce 8-amino-7-oxononanoate (AON), [acyl-carrier protein], and carbon dioxide. The protein is 8-amino-7-oxononanoate synthase of Salmonella schwarzengrund (strain CVM19633).